Here is a 195-residue protein sequence, read N- to C-terminus: Glycerol-3-phosphate acyltransferase (195 aa).

5 consecutive transmembrane segments (helical) span residues 3–23, 52–72, 80–100, 113–133, and 147–167; these read FQVV…GFIL, LALL…AIAQ, ILFL…YLFF, LIFI…ICFL, and LIAL…IFAI.

This sequence belongs to the PlsY family. As to quaternary structure, probably interacts with PlsX.

Its subcellular location is the cell inner membrane. It catalyses the reaction an acyl phosphate + sn-glycerol 3-phosphate = a 1-acyl-sn-glycero-3-phosphate + phosphate. It functions in the pathway lipid metabolism; phospholipid metabolism. Catalyzes the transfer of an acyl group from acyl-phosphate (acyl-PO(4)) to glycerol-3-phosphate (G3P) to form lysophosphatidic acid (LPA). This enzyme utilizes acyl-phosphate as fatty acyl donor, but not acyl-CoA or acyl-ACP. The sequence is that of Glycerol-3-phosphate acyltransferase from Ehrlichia ruminantium (strain Gardel).